We begin with the raw amino-acid sequence, 393 residues long: Ig heavy chain C region (393 aa).

Ig-like domains are found at residues 63 to 157 (PTVI…RNIT), 168 to 260 (PVIK…ASIH), and 270 to 370 (PSVS…RTVN). N-linked (GlcNAc...) asparagine glycans are attached at residues Asn-119, Asn-155, Asn-200, Asn-230, Asn-329, Asn-366, Asn-370, and Asn-380.

The polypeptide is Ig heavy chain C region (Heterodontus francisci (Horn shark)).